The following is a 443-amino-acid chain: Methyl-coenzyme M reductase subunit beta (443 aa).

A coenzyme M-binding site is contributed by Tyr367. Residue Gly369 coordinates coenzyme B.

It belongs to the methyl-coenzyme M reductase beta subunit family. As to quaternary structure, MCR is a hexamer of two alpha, two beta, and two gamma chains, forming a dimer of heterotrimers. The cofactor is coenzyme F430.

It is found in the cytoplasm. The enzyme catalyses coenzyme B + methyl-coenzyme M = methane + coenzyme M-coenzyme B heterodisulfide. It participates in one-carbon metabolism; methyl-coenzyme M reduction; methane from methyl-coenzyme M: step 1/1. Functionally, component of the methyl-coenzyme M reductase (MCR) I that catalyzes the reductive cleavage of methyl-coenzyme M (CoM-S-CH3 or 2-(methylthio)ethanesulfonate) using coenzyme B (CoB or 7-mercaptoheptanoylthreonine phosphate) as reductant which results in the production of methane and the mixed heterodisulfide of CoB and CoM (CoM-S-S-CoB). This is the final step in methanogenesis. The chain is Methyl-coenzyme M reductase subunit beta (mcrB) from Methanococcus voltae.